The following is a 173-amino-acid chain: Photosystem I assembly protein Ycf3 (173 aa).

TPR repeat units follow at residues Ala35 to Lys68, Gly72 to Gln105, and Gly120 to Gly153.

Belongs to the Ycf3 family.

The protein resides in the cellular thylakoid membrane. Its function is as follows. Essential for the assembly of the photosystem I (PSI) complex. May act as a chaperone-like factor to guide the assembly of the PSI subunits. The sequence is that of Photosystem I assembly protein Ycf3 from Prochlorococcus marinus (strain MIT 9301).